We begin with the raw amino-acid sequence, 94 residues long: MKYPKQIRTYCPFCKRHTIHKVEKVKKRPRSELSAGQRRFRRKLKGYTGFPRPNPAGREKPVKKLDLRFRCTVCGKAHTRGQGFRVKKFELVEV.

Positions 11, 14, 71, and 74 each coordinate Zn(2+). Residues 11–74 form a C4-type zinc finger; that stretch reads CPFCKRHTIH…LDLRFRCTVC (64 aa).

The protein belongs to the eukaryotic ribosomal protein eL42 family. As to quaternary structure, part of the 50S ribosomal subunit. Zn(2+) is required as a cofactor.

Its function is as follows. Binds to the 23S rRNA. The polypeptide is Large ribosomal subunit protein eL42 (Thermococcus kodakarensis (strain ATCC BAA-918 / JCM 12380 / KOD1) (Pyrococcus kodakaraensis (strain KOD1))).